A 253-amino-acid chain; its full sequence is Tryptophan synthase alpha chain (253 aa).

Catalysis depends on proton acceptor residues Glu-47 and Asp-58.

This sequence belongs to the TrpA family. As to quaternary structure, tetramer of two alpha and two beta chains.

It carries out the reaction (1S,2R)-1-C-(indol-3-yl)glycerol 3-phosphate + L-serine = D-glyceraldehyde 3-phosphate + L-tryptophan + H2O. It functions in the pathway amino-acid biosynthesis; L-tryptophan biosynthesis; L-tryptophan from chorismate: step 5/5. Functionally, the alpha subunit is responsible for the aldol cleavage of indoleglycerol phosphate to indole and glyceraldehyde 3-phosphate. In Lactococcus lactis subsp. lactis (strain IL1403) (Streptococcus lactis), this protein is Tryptophan synthase alpha chain.